The following is a 205-amino-acid chain: Methyltransferase-like 26 B (205 aa).

It belongs to the UPF0585 family.

The protein is Methyltransferase-like 26 B of Danio rerio (Zebrafish).